Consider the following 106-residue polypeptide: Large ribosomal subunit protein eL42 (106 aa).

It belongs to the eukaryotic ribosomal protein eL42 family.

The chain is Large ribosomal subunit protein eL42 (RPL44) from Kluyveromyces marxianus (Yeast).